Here is a 362-residue protein sequence, read N- to C-terminus: Chalcone synthase A (362 aa).

Residue cysteine 168 is part of the active site.

It belongs to the thiolase-like superfamily. Chalcone/stilbene synthases family.

The enzyme catalyses (E)-4-coumaroyl-CoA + 3 malonyl-CoA + 3 H(+) = 2',4,4',6'-tetrahydroxychalcone + 3 CO2 + 4 CoA. The protein operates within secondary metabolite biosynthesis; flavonoid biosynthesis. In terms of biological role, the primary product of this enzyme is 4,2',4',6'-tetrahydroxychalcone (also termed naringenin-chalcone or chalcone) which can under specific conditions spontaneously isomerize into naringenin. The polypeptide is Chalcone synthase A (CHSA) (Ipomoea platensis (Morning glory)).